A 51-amino-acid chain; its full sequence is Large ribosomal subunit protein eL39 (51 aa).

The protein belongs to the eukaryotic ribosomal protein eL39 family.

In Pyrobaculum neutrophilum (strain DSM 2338 / JCM 9278 / NBRC 100436 / V24Sta) (Thermoproteus neutrophilus), this protein is Large ribosomal subunit protein eL39.